The sequence spans 66 residues: Large ribosomal subunit protein uL29 (66 aa).

It belongs to the universal ribosomal protein uL29 family.

The sequence is that of Large ribosomal subunit protein uL29 from Borrelia hermsii (strain HS1 / DAH).